The following is a 338-amino-acid chain: Palmitoyltransferase ZDHHC15 (338 aa).

Residues 1-20 (MLAGCRVALPRGLRCCQRVL) are Cytoplasmic-facing. Residues 21-41 (SWVPVVIISLVVLWSYYAYVW) form a helical membrane-spanning segment. Residues 42-56 (ELCLVTVTNPAEKAA) lie on the Lumenal side of the membrane. A helical membrane pass occupies residues 57–77 (YLLIFHTVFLLFIWTYWKAIF). Over 78 to 172 (TPPKQPTKKF…NNCIGYSNYK (95 aa)) the chain is Cytoplasmic. Residues 129–179 (RFCDTCQMVKPDRCHHCSVCGMCVLKMDHHCPWVNNCIGYSNYKFFLLFLA) form the DHHC domain. Zn(2+)-binding residues include Cys131, Cys134, His144, Cys145, Cys148, Cys151, and His158. Cys159 acts as the S-palmitoyl cysteine intermediate in catalysis. Cys165 serves as a coordination point for Zn(2+). Residues 173–193 (FFLLFLAYAMLYCLYIGCTVF) form a helical membrane-spanning segment. Topologically, residues 194 to 210 (QYFILYWTDTLSNGRAK) are lumenal. The chain crosses the membrane as a helical span at residues 211–234 (FHVLFLLFVALMFFISLMFLFGYH). Residues 235 to 338 (CWLVSLNRTT…TSHITVHIEK (104 aa)) lie on the Cytoplasmic side of the membrane.

The protein belongs to the DHHC palmitoyltransferase family. Autopalmitoylated (in vitro).

It localises to the golgi apparatus membrane. Its subcellular location is the postsynaptic density. It catalyses the reaction L-cysteinyl-[protein] + hexadecanoyl-CoA = S-hexadecanoyl-L-cysteinyl-[protein] + CoA. The enzyme catalyses L-cysteinyl-[protein] + tetradecanoyl-CoA = S-tetradecanoyl-L-cysteinyl-[protein] + CoA. The catalysed reaction is L-cysteinyl-[protein] + octadecanoyl-CoA = S-octadecanoyl-L-cysteinyl-[protein] + CoA. Functionally, palmitoyltransferase that catalyzes the addition of palmitate onto various protein substrates. Has no stringent fatty acid selectivity and in addition to palmitate can also transfer onto target proteins myristate from tetradecanoyl-CoA and stearate from octadecanoyl-CoA. May thereby regulate target proteins association and localization to membranes. In the nervous system, probably catalyzes the palmitoylation of synaptic proteins and is involved in the differentiation of dopaminergic neurons and the development of the diencephalon. This Xenopus laevis (African clawed frog) protein is Palmitoyltransferase ZDHHC15 (zdhhc15).